The chain runs to 516 residues: Katanin p60 ATPase-containing subunit A1 (516 aa).

Residues 75 to 212 (GFKSEPAAPE…DEKKFDPAGY (138 aa)) are disordered. Composition is skewed to basic and acidic residues over residues 133 to 143 (ARKDPPRRSEP) and 155 to 167 (RGGRGPSDRRGDA). Residues 168 to 178 (RSGGGGRGGAR) are compositionally biased toward gly residues. The span at 179–212 (GSDKDKNRGGKSDKDKKAPSGEEGDEKKFDPAGY) shows a compositional bias: basic and acidic residues. 274–281 (GPPGTGKT) provides a ligand contact to ATP.

It belongs to the AAA ATPase family. Katanin p60 subunit A1 subfamily. As to quaternary structure, can homooligomerize into hexameric rings, which may be promoted by interaction with microtubules. Interacts with KATNB1, which may serve as a targeting subunit.

It is found in the cytoplasm. The protein resides in the cytoskeleton. The protein localises to the microtubule organizing center. Its subcellular location is the centrosome. It localises to the spindle pole. It catalyses the reaction n ATP + n H2O + a microtubule = n ADP + n phosphate + (n+1) alpha/beta tubulin heterodimers.. ATPase activity is stimulated by microtubules, which promote homooligomerization. ATP-dependent microtubule severing is stimulated by interaction with KATNB1. In terms of biological role, catalytic subunit of a complex which severs microtubules in an ATP-dependent manner. Microtubule severing may promote rapid reorganization of cellular microtubule arrays and the release of microtubules from the centrosome following nucleation. In mitotic spindles this could allow depolymerization of the microtubule end proximal to the centrosome, and subsequent poleward microtubule flux. This Strongylocentrotus purpuratus (Purple sea urchin) protein is Katanin p60 ATPase-containing subunit A1.